Here is a 337-residue protein sequence, read N- to C-terminus: Large ribosomal subunit protein uL3 (337 aa).

Residues 1 to 20 (MASIHRPKRGSLAFSPRKRA) form a disordered region.

Belongs to the universal ribosomal protein uL3 family. In terms of assembly, part of the 50S ribosomal subunit. Forms a cluster with proteins L14 and L24e.

Functionally, one of the primary rRNA binding proteins, it binds directly near the 3'-end of the 23S rRNA, where it nucleates assembly of the 50S subunit. The polypeptide is Large ribosomal subunit protein uL3 (Methanosarcina mazei (strain ATCC BAA-159 / DSM 3647 / Goe1 / Go1 / JCM 11833 / OCM 88) (Methanosarcina frisia)).